A 266-amino-acid chain; its full sequence is Glycine--tRNA ligase beta subunit (266 aa).

Belongs to the class-II aminoacyl-tRNA synthetase family. As to quaternary structure, tetramer of two alpha and two beta subunits.

It is found in the cytoplasm. The catalysed reaction is tRNA(Gly) + glycine + ATP = glycyl-tRNA(Gly) + AMP + diphosphate. This chain is Glycine--tRNA ligase beta subunit (glyS), found in Moraxella catarrhalis (Branhamella catarrhalis).